Consider the following 113-residue polypeptide: Large ribosomal subunit protein uL22 (113 aa).

The protein belongs to the universal ribosomal protein uL22 family. In terms of assembly, part of the 50S ribosomal subunit.

In terms of biological role, this protein binds specifically to 23S rRNA; its binding is stimulated by other ribosomal proteins, e.g. L4, L17, and L20. It is important during the early stages of 50S assembly. It makes multiple contacts with different domains of the 23S rRNA in the assembled 50S subunit and ribosome. Its function is as follows. The globular domain of the protein is located near the polypeptide exit tunnel on the outside of the subunit, while an extended beta-hairpin is found that lines the wall of the exit tunnel in the center of the 70S ribosome. The sequence is that of Large ribosomal subunit protein uL22 from Bacillus subtilis (strain 168).